Consider the following 4243-residue polypeptide: Fibrocystin-L (4243 aa).

Positions 1–20 are cleaved as a signal peptide; that stretch reads MGHLWLLGIWGLCGLLLCAA. Residues 21 to 4210 are Extracellular-facing; that stretch reads DPSTDGSQII…KASTVGTYAQ (4190 aa). 3 consecutive IPT/TIG domains span residues 31-129, 146-255, and 270-361; these read PKVT…TCKG, PTIR…KMAY, and AEVT…ILEY. Residue Thr-122 is glycosylated (O-linked (GalNAc...) threonine). In terms of domain architecture, PA14 spans 337–492; sequence PGGRGLKLEV…NVYTEQQTGD (156 aa). O-linked (GalNAc...) threonine glycosylation occurs at Thr-445. IPT/TIG domains are found at residues 1067-1151, 1155-1234, 1240-1322, 1330-1469, 1566-1649, 1659-1743, 1749-1828, 1831-1910, 1916-1997, 1999-2085, and 2091-2176; these read PLVL…EFYF, SQIS…AFSY, PIIT…RDKL, LEVT…SFSY, PSIS…TLSN, PNID…TFSY, PYIT…NLTV, PPVA…LFTY, PFLR…VFEY, LNIQ…PFTY, and PLIT…DFLY. O-linked (GalNAc...) threonine glycosylation is found at Thr-1803 and Thr-1839. Positions 2184-2304 constitute a G8 1 domain; the sequence is FSWGGKSPPE…VPVTWTRLAH (121 aa). O-linked (GalNAc...) threonine glycosylation is present at Thr-2320. 4 PbH1 repeats span residues 2508-2530, 2566-2588, 2665-2687, and 2733-2756; these read THHL…FIED, NPNN…WYRM, GGAL…ETKR, and SEGL…ALGV. The 139-residue stretch at 3036–3174 folds into the G8 2 domain; it reads SFWQSSRENN…HSIYKTKLSE (139 aa). PbH1 repeat units lie at residues 3293-3315, 3355-3377, 3416-3438, 3471-3493, and 3527-3548; these read KGNA…RDST, TDGL…RIWG, GTNT…RIDG, PGCS…YFQT, and SKNV…NCSD. An O-linked (GalNAc...) threonine glycan is attached at Thr-3736. Residues 4211 to 4231 form a helical membrane-spanning segment; sequence IMTVVISCLVGRMWLLEIFMA. Over 4232–4243 the chain is Cytoplasmic; the sequence is AVSTLNITLRSY.

It is found in the membrane. It localises to the cell projection. The protein resides in the stereocilium membrane. In terms of biological role, component of hair-cell stereocilia coat. Required for normal hearing. In Homo sapiens (Human), this protein is Fibrocystin-L (PKHD1L1).